A 128-amino-acid chain; its full sequence is L-ectoine synthase (128 aa).

Belongs to the ectoine synthase family.

The enzyme catalyses (2S)-4-acetamido-2-aminobutanoate = L-ectoine + H2O. It functions in the pathway amine and polyamine biosynthesis; ectoine biosynthesis; L-ectoine from L-aspartate 4-semialdehyde: step 3/3. Functionally, catalyzes the circularization of gamma-N-acetyl-alpha,gamma-diaminobutyric acid (ADABA) to ectoine (1,4,5,6-tetrahydro-2-methyl-4-pyrimidine carboxylic acid), which is an excellent osmoprotectant. This chain is L-ectoine synthase, found in Vibrio parahaemolyticus serotype O3:K6 (strain RIMD 2210633).